The sequence spans 217 residues: MGQKINPLGFRLGTTQNHHSVWFAQPKSYSEGLQEDQKIRDCIKNYVQKNKRIPLVEGIARIEIQKRIDLIQVIIYMGFPKLLIEDRPRGIEELQINLQKEFNSMNRKLNIAITRIAKPYGQPNILAEYIAGQLKSRVSFRKAMKKAIELTEQTDTKGIQVQIAGRIDGKEIARVEWIREGRVPLQTIRAKIDYCSYTVRTIYGVLGIKIWIFVDEE.

Residues I43–A117 form the KH type-2 domain.

The protein belongs to the universal ribosomal protein uS3 family. As to quaternary structure, part of the 30S ribosomal subunit.

The protein localises to the plastid. It localises to the chloroplast. The chain is Small ribosomal subunit protein uS3c (rps3) from Platanus occidentalis (Sycamore).